The sequence spans 144 residues: Transcriptional regulator SlyA (144 aa).

Residues 2–135 (ESPLGSDLAR…LIKLVAKLEH (134 aa)) enclose the HTH marR-type domain. Residues 49–72 (QIQLAKAIGIEQPSLVRTLDQLED) constitute a DNA-binding region (H-T-H motif).

It belongs to the SlyA family. Homodimer.

Its function is as follows. Transcription regulator that can specifically activate or repress expression of target genes. Required to activate expression of virulent genes. The sequence is that of Transcriptional regulator SlyA from Salmonella choleraesuis (strain SC-B67).